The chain runs to 280 residues: Transcription factor ovo-like homolog lin-48 (280 aa).

4 C2H2-type zinc fingers span residues 133 to 155 (LTCH…IKCH), 161 to 183 (YLCT…TRTH), 189 to 212 (YKCE…RKVH), and 228 to 251 (FVCE…KVVH).

The protein localises to the nucleus. In terms of biological role, transcription factor. Involved in development of the hindgut, the male tail, and the excretory duct cell. Involved in modulating function of excretory duct cells. Plays a role in left/right patterning of cell fates in the hindgut. This Caenorhabditis elegans protein is Transcription factor ovo-like homolog lin-48.